The primary structure comprises 114 residues: Progonadoliberin-2 (114 aa).

A signal peptide spans 1-25 (MASSMLGFLLLLLLLMAAHPGPSEA). The segment at 22–80 (PSEAQHWSHGWYPGGKRASNSPQDPQSALRPPAPSAAQTAHSFRSAALASPEDSVPWEG) is disordered. G35 carries the post-translational modification Glycine amide.

This sequence belongs to the GnRH family. Midbrain.

The protein localises to the secreted. Stimulates the secretion of gonadotropins; it stimulates the secretion of both luteinizing and follicle-stimulating hormones. The chain is Progonadoliberin-2 (GNRH2) from Tupaia belangeri (Common tree shrew).